Consider the following 99-residue polypeptide: MISQERLLKVILAPHISEKSTVCAENDNTVVFRVAIDATKAEIKAAVAQLFEVEVDSVRTLVNKGKTKRTGARMGRRVDWKKAYVTLAAGAEIDFVGAE.

It belongs to the universal ribosomal protein uL23 family. Part of the 50S ribosomal subunit. Contacts protein L29, and trigger factor when it is bound to the ribosome.

One of the early assembly proteins it binds 23S rRNA. One of the proteins that surrounds the polypeptide exit tunnel on the outside of the ribosome. Forms the main docking site for trigger factor binding to the ribosome. The protein is Large ribosomal subunit protein uL23 of Shewanella woodyi (strain ATCC 51908 / MS32).